The sequence spans 70 residues: Large ribosomal subunit protein uL29 (70 aa).

The protein belongs to the universal ribosomal protein uL29 family.

The sequence is that of Large ribosomal subunit protein uL29 from Clostridium botulinum (strain ATCC 19397 / Type A).